We begin with the raw amino-acid sequence, 579 residues long: SHC-transforming protein 1 (579 aa).

At M1 the chain carries N-acetylmethionine. The interval M1–H137 is disordered. Residues E16–P44 are compositionally biased toward low complexity. Phosphoserine is present on residues S36 and S139. The residue at position 154 (K154) is an N6-acetyllysine. Positions M156–E339 constitute a PID domain. A disordered region spans residues W337–E357. The segment at E340–P483 is CH1. A phosphotyrosine mark is found at Y349, Y350, and Y423. A disordered region spans residues A432–P451. Position 449 is a phosphoserine (S449). Residues W484 to V575 form the SH2 domain.

As to quaternary structure, interacts with CPNE3; this interaction may mediate the binding of CPNE3 with ERBB2. Interacts with the NPXY motif of tyrosine-phosphorylated IGF1R and INSR in vitro via the PID domain. Once activated, binds to GRB2. Interacts with tyrosine-phosphorylated DDR2 and CD3T. Interacts with the N-terminal region of APS. Interacts with GRB7 and KIT. Interacts with PTK2/FAK1. Interacts with phosphorylated LRP1 and IRS4. Interacts with FLT4 (tyrosine-phosphorylated). Interacts with PDGFRB (tyrosine-phosphorylated). Interacts with ERBB4. Interacts with TEK/TIE2 (tyrosine-phosphorylated). Interacts with ALK, GAB2, TRIM31, INPP5D/SHIP1 and INPPL1/SHIP2. Interacts with PTPN6/SHP (tyrosine phosphorylated). Identified in a complex containing FGFR4, NCAM1, CDH2, PLCG1, FRS2, SRC, SHC1, GAP43 and CTTN. Interacts with EPHB1 and GRB2; activates the MAPK/ERK cascade to regulate cell migration. Interacts with the Trk receptors NTRK1, NTRK2 and NTRK3; in a phosphotyrosine-dependent manner. Interacts with CEACAM1; this interaction is CEACAM1-phosphorylation-dependent and mediates interaction with EGFR or INSR resulting in decrease coupling of SHC1 to the MAPK3/ERK1-MAPK1/ERK2 pathway. Interacts (via PID domain) with PEAK1 (when phosphorylated at 'Tyr-1177'). Found in a complex with PPP1CA, PPP1CC, SHC1 and PEAK1. Phosphorylated in response to FLT4 signaling. Tyrosine phosphorylated by ligand-activated PDGFRB. May be tyrosine phosphorylated by activated PTK2/FAK1. Tyrosine phosphorylated by TEK/TIE2. Tyrosine phosphorylated by activated PTK2B/PYK2. Dephosphorylation by PTPN2 may regulate interaction with GRB2. Phosphorylated by activated epidermal growth factor receptor. Phosphorylated in response to KIT signaling. Isoform p47Shc and isoform p52Shc are phosphorylated on tyrosine residues of the Pro-rich domain. Isoform p66Shc is phosphorylated on Ser-36 by PRKCB upon treatment with insulin, hydrogen peroxide or irradiation with ultraviolet light. FLT3 signaling promotes tyrosine phosphorylation of isoform p47Shc and isoform p52Shc. Also tyrosine phosphorylated by ligand-activated ALK. In terms of tissue distribution, widely expressed. Expressed in neural stem cells but absent in mature neurons.

It localises to the cytoplasm. Its subcellular location is the cell junction. The protein localises to the focal adhesion. It is found in the mitochondrion matrix. The protein resides in the mitochondrion. Signaling adapter that couples activated growth factor receptors to signaling pathways. Participates in signaling downstream of the angiopoietin receptor TEK/TIE2, and plays a role in the regulation of endothelial cell migration and sprouting angiogenesis. Participates in a signaling cascade initiated by activated KIT and KITLG/SCF. Isoform p47Shc and isoform p52Shc, once phosphorylated, couple activated receptor kinases to Ras via the recruitment of the GRB2/SOS complex and are implicated in the cytoplasmic propagation of mitogenic signals. Isoform p47Shc and isoform p52 may thus function as initiators of the Ras signaling cascade in various non-neuronal systems. Isoform p66Shc does not mediate Ras activation, but is involved in signal transduction pathways that regulate the cellular response to oxidative stress and life span. Isoform p66Shc acts as a downstream target of the tumor suppressor p53 and is indispensable for the ability of stress-activated p53 to induce elevation of intracellular oxidants, cytochrome c release and apoptosis. The expression of isoform p66Shc has been correlated with life span. The polypeptide is SHC-transforming protein 1 (Shc1) (Mus musculus (Mouse)).